Here is a 340-residue protein sequence, read N- to C-terminus: GTP 3',8-cyclase (340 aa).

The Radical SAM core domain occupies 8–227 (KLGRPIRDLR…EMIEQNFDIE (220 aa)). GTP is bound at residue Arg-17. Residues Cys-24 and Cys-28 each coordinate [4Fe-4S] cluster. Residue Tyr-30 coordinates S-adenosyl-L-methionine. Cys-31 provides a ligand contact to [4Fe-4S] cluster. Arg-71 contributes to the GTP binding site. Gly-75 provides a ligand contact to S-adenosyl-L-methionine. Thr-102 contacts GTP. An S-adenosyl-L-methionine-binding site is contributed by Ser-126. Lys-163 lines the GTP pocket. Met-197 serves as a coordination point for S-adenosyl-L-methionine. [4Fe-4S] cluster-binding residues include Cys-261 and Cys-264. 266–268 (RAR) contributes to the GTP binding site. Cys-278 contributes to the [4Fe-4S] cluster binding site.

This sequence belongs to the radical SAM superfamily. MoaA family. Monomer and homodimer. [4Fe-4S] cluster is required as a cofactor.

It carries out the reaction GTP + AH2 + S-adenosyl-L-methionine = (8S)-3',8-cyclo-7,8-dihydroguanosine 5'-triphosphate + 5'-deoxyadenosine + L-methionine + A + H(+). The protein operates within cofactor biosynthesis; molybdopterin biosynthesis. Its function is as follows. Catalyzes the cyclization of GTP to (8S)-3',8-cyclo-7,8-dihydroguanosine 5'-triphosphate. The chain is GTP 3',8-cyclase from Staphylococcus saprophyticus subsp. saprophyticus (strain ATCC 15305 / DSM 20229 / NCIMB 8711 / NCTC 7292 / S-41).